The sequence spans 304 residues: MKNATLHQFEVFAAIARTGSFTKAAEELFLTQPTVSQQMKQLTKAIGVPLYEQIGRKIYLTEAGQAVLDASKNITSCLDQLQEVIADLQGLKKGNLRLATITTGKYFVPRLLGEFRQQYPGISISLQIGNRQQILERLANNLDDLYFLGKPPSNLDINIRHFLENPLVVIASRQHPLVKEKKISLERLVNEPLIMRESGSGTRMAVEEFFSENRLKMNVEMEISSNEAIKQAVYGGLGISILSLYSLALEGINGPLAVLDVEGFPLQKHWYIIYQKSKQLSIVAQTFLDYLFAHDEAVSIAQIF.

One can recognise an HTH lysR-type domain in the interval 1–61; it reads MKNATLHQFE…EQIGRKIYLT (61 aa). The segment at residues 21–40 is a DNA-binding region (H-T-H motif); the sequence is FTKAAEELFLTQPTVSQQMK.

The protein belongs to the LysR transcriptional regulatory family.

The protein localises to the cytoplasm. In terms of biological role, activates transcription of the cmpABCD operon under carbon dioxide-limited conditions. Specifically binds to the cmpR-cmpA intergenic region. This is HTH-type transcriptional activator CmpR (cmpR) from Synechocystis sp. (strain ATCC 27184 / PCC 6803 / Kazusa).